The sequence spans 187 residues: UPF0167 protein MT2352 (187 aa).

It belongs to the UPF0167 family.

The polypeptide is UPF0167 protein MT2352 (Mycobacterium tuberculosis (strain CDC 1551 / Oshkosh)).